The chain runs to 621 residues: MEFPGGNDNYLTITGPSHPFLSGAETFHTPSLGDEEFEIPPISLDSDPSLAVSDVVGHFDDLADPSSSQDGSFSAQYGVQTLDMPVGMTHGLMEQGGGLLSGGLTMDLDHSIGTQYSANPPVTIDVPMTDMTSGLMGHSQLTTIDQSELSSQLGLSLGGGTILPPAQSPEDRLSTTPSPTSSLHEDGVEDFRRQLPSQKTVVVEAGKKQKAPKKRKKKDPNEPQKPVSAYALFFRDTQAAIKGQNPNATFGEVSKIVASMWDSLGEEQKQVYKRKTEAAKKEYLKALAAYKDNQECQATVETVELDPAPPSQTPSPPPMATVDPASPAPASIEPPALSPSIVVNSTLSSYVANQASSGAGGQPNITKLIITKQMLPSSITMSQGGMVTVIPATVVTSRGLQLGQTSTATIQPSQQAQIVTRSVLQAAAAAAAAASMQLPPPRLQPPPLQQMPQPPTQQQVTILQQPPPLQAMQQPPPQKVRINLQQQPPPLQIKSVPLPTLKMQTTLVPPTVESSPERPMNNSPEAHTVEAPSPETICEMITDVVPEVESPSQMDVELVSGSPVALSPQPRCVRSGCENPPIVSKDWDNEYCSNECVVKHCRDVFLAWVASRNSNTVVFVK.

Disordered regions lie at residues 153–227 and 305–333; these read LGLS…QKPV and LDPAPPSQTPSPPPMATVDPASPAPASIE. At Thr176 the chain carries Phosphothreonine. Phosphoserine occurs at positions 178, 181, and 182. The span at 183–193 shows a compositional bias: basic and acidic residues; the sequence is LHEDGVEDFRR. Positions 208-218 are enriched in basic residues; sequence KQKAPKKRKKK. A Nuclear localization signal motif is present at residues 213-218; that stretch reads KKRKKK. The segment at residues 223-291 is a DNA-binding region (HMG box); sequence PQKPVSAYAL…EYLKALAAYK (69 aa). The segment covering 307 to 319 has biased composition (pro residues); that stretch reads PAPPSQTPSPPPM. Thr313 bears the Phosphothreonine mark. Residue Ser315 is modified to Phosphoserine. A compositionally biased stretch (low complexity) spans 320 to 333; that stretch reads ATVDPASPAPASIE. Arg481 is subject to Asymmetric dimethylarginine. Polar residues predominate over residues 510 to 525; it reads PTVESSPERPMNNSPE. Residues 510–529 form a disordered region; sequence PTVESSPERPMNNSPEAHTV. 6 positions are modified to phosphoserine: Ser533, Ser550, Ser552, Ser560, Ser562, and Ser567.

In terms of assembly, component of the PNUTS-PP1 phosphatase complex, composed of PPP1R10/PNUTS, TOX4, WDR82 and PPP1CA or PPP1CB or PPP1CC. Interacts with PPP1R10/PNUTS. Interacts with FOXO1 and CREB1 (increased by cAMP); FOXO1 and CREB1 are required for full induction of TOX4-dependent activity and the interactions are inhibited by insulin. As to expression, expressed in liver (at protein level).

It localises to the nucleus. Its subcellular location is the chromosome. With respect to regulation, in liver, recruited to target gene promoters following treatment with dexamethasone and cAMP. Binding is decreased in presence of insulin. Its function is as follows. Transcription factor that modulates cell fate reprogramming from the somatic state to the pluripotent and neuronal fate. In liver, controls the expression of hormone-regulated gluconeogenic genes such as G6PC1 and PCK1. This regulation is independent of the insulin receptor activation. Also acts as a regulatory component of protein phosphatase 1 (PP1) complexes. Component of the PNUTS-PP1 protein phosphatase complex, a PP1 complex that regulates RNA polymerase II transcription pause-release. PNUTS-PP1 also plays a role in the control of chromatin structure and cell cycle progression during the transition from mitosis into interphase. The sequence is that of TOX high mobility group box family member 4 from Homo sapiens (Human).